Consider the following 97-residue polypeptide: Putative septation protein SpoVG (97 aa).

Belongs to the SpoVG family.

In terms of biological role, essential for sporulation. Interferes with or is a negative regulator of the pathway leading to asymmetric septation. This is Putative septation protein SpoVG from Bacillus cereus (strain 03BB102).